Consider the following 414-residue polypeptide: Light-independent protochlorophyllide reductase subunit N (414 aa).

Cys16, Cys41, and Cys98 together coordinate [4Fe-4S] cluster.

The protein belongs to the BchN/ChlN family. As to quaternary structure, protochlorophyllide reductase is composed of three subunits; BchL, BchN and BchB. Forms a heterotetramer of two BchB and two BchN subunits. [4Fe-4S] cluster is required as a cofactor.

The catalysed reaction is chlorophyllide a + oxidized 2[4Fe-4S]-[ferredoxin] + 2 ADP + 2 phosphate = protochlorophyllide a + reduced 2[4Fe-4S]-[ferredoxin] + 2 ATP + 2 H2O. Its pathway is porphyrin-containing compound metabolism; bacteriochlorophyll biosynthesis (light-independent). Functionally, component of the dark-operative protochlorophyllide reductase (DPOR) that uses Mg-ATP and reduced ferredoxin to reduce ring D of protochlorophyllide (Pchlide) to form chlorophyllide a (Chlide). This reaction is light-independent. The NB-protein (BchN-BchB) is the catalytic component of the complex. The chain is Light-independent protochlorophyllide reductase subunit N from Roseiflexus castenholzii (strain DSM 13941 / HLO8).